A 630-amino-acid polypeptide reads, in one-letter code: Mannosyl-oligosaccharide 1,2-alpha-mannosidase IC (630 aa).

The Cytoplasmic portion of the chain corresponds to 1–22 (MLMRKVPGFVPASPWGLRLPQK). Residues 23–43 (FLFLLFLSGLVTLCFGALFLL) form a helical; Signal-anchor for type II membrane protein membrane-spanning segment. At 44 to 630 (PHSSRLKRLF…DSSGRAWGRH (587 aa)) the chain is on the lumenal side. Positions 74–140 (PAREQEPPPN…ASRPGDEGVP (67 aa)) are disordered. Over residues 80–89 (PPPNPAPAAP) the composition is skewed to pro residues. Residues 102–113 (PRRRKGGLRRTR) show a composition bias toward basic residues. A Phosphoserine modification is found at serine 164. N-linked (GlcNAc...) asparagine glycosylation occurs at asparagine 250. Cysteines 453 and 485 form a disulfide. Glutamate 499 (proton donor) is an active-site residue. Threonine 610 is a binding site for Ca(2+). Asparagine 618 is a glycosylation site (N-linked (GlcNAc...) asparagine).

It belongs to the glycosyl hydrolase 47 family. Requires Ca(2+) as cofactor. As to expression, expressed in most tissues with the exception of lung, muscle and pancreas. Highly expressed in placenta.

Its subcellular location is the golgi apparatus membrane. It catalyses the reaction N(4)-(alpha-D-Man-(1-&gt;2)-alpha-D-Man-(1-&gt;2)-alpha-D-Man-(1-&gt;3)-[alpha-D-Man-(1-&gt;2)-alpha-D-Man-(1-&gt;3)-[alpha-D-Man-(1-&gt;2)-alpha-D-Man-(1-&gt;6)]-alpha-D-Man-(1-&gt;6)]-beta-D-Man-(1-&gt;4)-beta-D-GlcNAc-(1-&gt;4)-beta-D-GlcNAc)-L-asparaginyl-[protein] (N-glucan mannose isomer 9A1,2,3B1,2,3) + 4 H2O = N(4)-(alpha-D-Man-(1-&gt;3)-[alpha-D-Man-(1-&gt;3)-[alpha-D-Man-(1-&gt;6)]-alpha-D-Man-(1-&gt;6)]-beta-D-Man-(1-&gt;4)-beta-D-GlcNAc-(1-&gt;4)-beta-D-GlcNAc)-L-asparaginyl-[protein] (N-glucan mannose isomer 5A1,2) + 4 beta-D-mannose. It carries out the reaction N(4)-(alpha-D-Man-(1-&gt;2)-alpha-D-Man-(1-&gt;2)-alpha-D-Man-(1-&gt;3)-[alpha-D-Man-(1-&gt;3)-[alpha-D-Man-(1-&gt;2)-alpha-D-Man-(1-&gt;6)]-alpha-D-Man-(1-&gt;6)]-beta-D-Man-(1-&gt;4)-beta-D-GlcNAc-(1-&gt;4)-beta-D-GlcNAc)-L-asparaginyl-[protein] (N-glucan mannose isomer 8A1,2,3B1,3) + 3 H2O = N(4)-(alpha-D-Man-(1-&gt;3)-[alpha-D-Man-(1-&gt;3)-[alpha-D-Man-(1-&gt;6)]-alpha-D-Man-(1-&gt;6)]-beta-D-Man-(1-&gt;4)-beta-D-GlcNAc-(1-&gt;4)-beta-D-GlcNAc)-L-asparaginyl-[protein] (N-glucan mannose isomer 5A1,2) + 3 beta-D-mannose. Its pathway is protein modification; protein glycosylation. With respect to regulation, inhibited by both 1-deoxymannojirimycin and kifunensine. Its function is as follows. Involved in the maturation of Asn-linked oligosaccharides. Trim alpha-1,2-linked mannose residues from Man(9)GlcNAc(2) to produce first Man(8)GlcNAc(2) then Man(6)GlcNAc and a small amount of Man(5)GlcNAc. The sequence is that of Mannosyl-oligosaccharide 1,2-alpha-mannosidase IC (MAN1C1) from Homo sapiens (Human).